A 2515-amino-acid polypeptide reads, in one-letter code: Polyprotein P1234 (2515 aa).

Positions 30–260 constitute an Alphavirus-like MT domain; that stretch reads VAQQATPNDH…EHRASLQSWH (231 aa). The tract at residues 245–264 is nsP1 membrane-binding; that stretch reads GSTLYPEHRASLQSWHLPSV. C420 carries S-palmitoyl cysteine; by host lipidation. Residues 695–850 enclose the (+)RNA virus helicase ATP-binding domain; it reads ELTNPPYHEL…RDICTKTFYK (156 aa). Position 726–733 (726–733) interacts with a ribonucleoside 5'-triphosphate; the sequence is GTPGSGKS. In terms of domain architecture, (+)RNA virus helicase C-terminal spans 851–999; sequence FISRRCTQPV…IEDWEAEHKG (149 aa). Residues 1012 to 1341 enclose the Peptidase C9 domain; the sequence is NPFSCKTNVC…CVISSVYEGT (330 aa). The interval 1013-1032 is nucleolus localization signal; that stretch reads PFSCKTNVCWAKALEPILAT. Residue C1021 is the For cysteine protease nsP2 activity of the active site. The Nuclear export signal motif lies at 1066–1075; it reads IKFFGMDLTS. The For cysteine protease nsP2 activity role is filled by H1098. A Nuclear localization signal motif is present at residues 1196–1200; that stretch reads PHKRI. The 160-residue stretch at 1348-1507 folds into the Macro domain; sequence APSYRTKREN…RIDAVLQLKE (160 aa). Residues N1371, G1379, G1459, I1460, and Y1461 each contribute to the ADP-D-ribose site. C1610, C1612, C1635, and C1653 together coordinate Zn(2+). Disordered stretches follow at residues 1678 to 1705 and 1777 to 1797; these read QPAA…DNTS and LAAA…SSAD. 2 short sequence motifs (FGDF; binding to host G3BP1) span residues 1839-1842 and 1862-1865; these read FGSF. The region spanning 2269 to 2384 is the RdRp catalytic domain; sequence DPVLETDIAS…HGVVSDKEMA (116 aa).

In terms of assembly, interacts with non-structural protein 3. Interacts with RNA-directed RNA polymerase nsP4. Interacts with protease nsP2. interacts with itself. Interacts with mRNA-capping enzyme nsP1. Interacts with host DDX1. Interacts with host DDX3. Interacts (via C-terminus) with host G3BP1; this interaction inhibits the formation of host stress granules on viral mRNAs and the nsp3-G3BP1 complexes bind viral RNAs and probably orchestrate the assembly of viral replication complexes. Interacts (via C-terminus) with host G3BP2; this interaction inhibits the formation of host stress granules on viral mRNAs and the nsp3-G3BP2 complexes bind viral RNAs and probably orchestrate the assembly of viral replication complexes. As to quaternary structure, interacts with mRNA-capping enzyme nsP1. Interacts with protease nsP2. interacts with itself. In terms of assembly, interacts with RNA-directed RNA polymerase nsP4. Interacts with mRNA-capping enzyme nsP1. Interacts with KPNA1/karyopherin-alpha1; this interaction probably allows the active transport of protease nsP2 into the host nucleus. It depends on Mg(2+) as a cofactor. The cofactor is Mn(2+). In terms of processing, specific enzymatic cleavages in vivo yield mature proteins. The processing of the polyprotein is temporally regulated. In early stages (1.7 hpi), P1234 is first cleaved in trans through its nsP2 protease activity, releasing P123' and nsP4, which associate to form the early replication complex. At the same time, P1234 is also cut at the nsP1/nsP2 site early in infection but with lower efficiency. After replication of the viral minus-strand RNAs (4 hpi), the polyproteins are cut at the nsP1/nsP2 and nsP2/nsP3 sites very efficiently, preventing accumulation of P123' and P1234 and allowing the formation of the late replication complex. NsP3'/nsP4 site is not cleaved anymore and P34 is produced rather than nsP4. Specific enzymatic cleavages in vivo yield mature proteins. The processing of the polyprotein is temporally regulated. In early stages (1.7 hpi), P123 is cleaved at the nsP1/nsP2 site with low efficiency. After replication of the viral minus-strand RNAs (4 hpi), the polyproteins are cut at the nsP1/nsP2 and nsP2/nsP3 sites very efficiently, preventing accumulation of P123 and allowing the formation of the late replication complex. Post-translationally, specific enzymatic cleavages in vivo yield mature proteins. The processing of the polyprotein is temporally regulated. In early stages (1.7 hpi), P123' is cleaved at the nsP1/nsP2 site with low efficiency. After replication of the viral minus-strand RNAs (4 hpi), the polyproteins are cut at the nsP1/nsP2 and nsP2/nsP3 sites very efficiently, preventing accumulation of P123' and allowing the formation of the late replication complex. In terms of processing, palmitoylated by host palmitoyltransferases ZDHHC2 and ZDHHC19. Phosphorylated by host on serines and threonines. Post-translationally, ubiquitinated; targets the protein for rapid degradation via the ubiquitin system. Nsp4 is present in extremely low quantities due to low frequency of translation through the amber stop-codon and the degradation by the ubiquitin pathway.

It is found in the host cytoplasmic vesicle membrane. It localises to the host cell membrane. Its subcellular location is the host cell projection. The protein resides in the host filopodium. The protein localises to the host nucleus. It is found in the host cytoplasm. It catalyses the reaction GTP + S-adenosyl-L-methionine = N(7)-methyl-GTP + S-adenosyl-L-homocysteine. The catalysed reaction is N(7)-methyl-GTP + L-histidyl-[protein] = N(tele)-(N(7)-methylguanosine 5'-phospho)-L-histidyl-[protein] + diphosphate. The enzyme catalyses N(tele)-(N(7)-methylguanosine 5'-phospho)-L-histidyl-[protein] + a 5'-end diphospho-(purine-ribonucleoside) in mRNA + H(+) = a 5'-end (N(7)-methyl 5'-triphosphoguanosine)-(purine-ribonucleoside) in mRNA + L-histidyl-[protein]. It carries out the reaction a 5'-end triphospho-ribonucleoside in mRNA + H2O = a 5'-end diphospho-ribonucleoside in mRNA + phosphate + H(+). It catalyses the reaction a ribonucleoside 5'-triphosphate + H2O = a ribonucleoside 5'-diphosphate + phosphate + H(+). The catalysed reaction is ATP + H2O = ADP + phosphate + H(+). The enzyme catalyses RNA(n) + a ribonucleoside 5'-triphosphate = RNA(n+1) + diphosphate. It carries out the reaction RNA(n) + ATP = RNA(n)-3'-adenine ribonucleotide + diphosphate. It catalyses the reaction 4-O-(ADP-D-ribosyl)-L-aspartyl-[protein] + H2O = L-aspartyl-[protein] + ADP-D-ribose + H(+). The catalysed reaction is 5-O-(ADP-D-ribosyl)-L-glutamyl-[protein] + H2O = L-glutamyl-[protein] + ADP-D-ribose + H(+). The enzyme catalyses ADP-alpha-D-ribose 1''-phosphate + H2O = ADP-D-ribose + phosphate. Inactive precursor of the viral replicase, which is activated by cleavages carried out by the viral protease nsP2. In terms of biological role, the early replication complex formed by the polyprotein P123 and nsP4 synthesizes minus-strand RNAs. As soon P123 is cleaved into mature proteins, the plus-strand RNAs synthesis begins. Functionally, the early replication complex formed by the polyprotein P123' and nsP4 synthesizes minus-strand RNAs. Polyprotein P123' is a short-lived polyprotein that accumulates during early stage of infection. As soon P123' is cleaved into mature proteins, the plus-strand RNAs synthesis begins. Its function is as follows. Cytoplasmic capping enzyme that catalyzes two virus-specific reactions: methyltransferase and nsP1 guanylyltransferase. mRNA-capping is necessary since all viral RNAs are synthesized in the cytoplasm, and host capping enzymes are restricted to the nucleus. The enzymatic reaction involves a covalent link between 7-methyl-GMP and nsP1, whereas eukaryotic capping enzymes form a covalent complex only with GMP. nsP1 capping consists in the following reactions: GTP is first methylated into 7-methyl-GMP and then is covalently linked to nsP1 to form the m7GMp-nsP1 complex from which 7-methyl-GMP complex is transferred to the mRNA to create the cap structure. NsP1 is needed for the initiation of the minus-strand RNAs synthesis. Probably serves as a membrane anchor for the replication complex composed of nsP1-nsP4. Palmitoylated nsP1 is remodeling host cell cytoskeleton, and induces filopodium-like structure formation at the surface of the host cell. Interacts with host TMEM45B; this interaction leads to viral replication inhibition. Multifunctional protein whose N-terminus is part of the RNA polymerase complex and displays NTPase, RNA triphosphatase and helicase activities. NTPase and RNA triphosphatase are involved in viral RNA capping and helicase keeps a check on the dsRNA replication intermediates. The C-terminus harbors a protease that specifically cleaves the polyproteins and releases the mature proteins. Required for the shutoff of minus-strand RNAs synthesis. Specifically inhibits the host IFN response by promoting the nuclear export of host STAT1. Also inhibits host transcription by inducing rapid proteasome-dependent degradation of POLR2A, a catalytic subunit of the RNAPII complex. The resulting inhibition of cellular protein synthesis serves to ensure maximal viral gene expression and to evade host immune response. In terms of biological role, seems to be essential for minus-strand RNAs and subgenomic 26S mRNAs synthesis. Displays mono-ADP-ribosylhydrolase activity. ADP-ribosylation is a post-translational modification that controls various processes of the host cell and the virus probably needs to revert it for optimal viral replication. Binds proteins of FXR family and sequesters them into the viral RNA replication complexes thereby inhibiting the formation of host stress granules on viral mRNAs. The nsp3'-FXR complexes bind viral RNAs and probably orchestrate the assembly of viral replication complexes, thanks to the ability of FXR family members to self-assemble and bind DNA. Functionally, seems to be essential for minus-strand RNAs and subgenomic 26S mRNAs synthesis. Displays mono-ADP-ribosylhydrolase activity. ADP-ribosylation is a post-translantional modification that controls various processes of the host cell and the virus probably needs to revert it for optimal viral replication. Binds proteins of G3BP family and sequesters them into the viral RNA replication complexes thereby inhibiting the formation of host stress granules on viral mRNAs. The nsp3-G3BP complexes bind viral RNAs and probably orchestrate the assembly of viral replication complexes, thanks to the ability of G3BP family members to self-assemble and bind DNA. Its function is as follows. RNA dependent RNA polymerase. Replicates genomic and antigenomic RNA by recognizing replications specific signals. The early replication complex formed by the polyprotein P123 and nsP4 synthesizes minus-strand RNAs. The late replication complex composed of fully processed nsP1-nsP4 is responsible for the production of genomic and subgenomic plus-strand RNAs. The core catalytic domain of nsP4 also possesses terminal adenylyltransferase (TATase) activity that is probably involved in maintenance and repair of the poly(A) tail, an element required for replication of the viral genome. Interacts with host TMEM45B; this interaction leads to viral replication inhibition. In Acrocephalus scirpaceus (Eurasian reed-warbler), this protein is Polyprotein P1234.